The chain runs to 941 residues: DNA mismatch repair protein MutS (941 aa).

Residue 613–620 coordinates ATP; that stretch reads GPNMAGKS.

It belongs to the DNA mismatch repair MutS family.

Its function is as follows. This protein is involved in the repair of mismatches in DNA. It is possible that it carries out the mismatch recognition step. This protein has a weak ATPase activity. This is DNA mismatch repair protein MutS from Clostridium botulinum (strain Alaska E43 / Type E3).